Consider the following 259-residue polypeptide: Emerin (259 aa).

Met-1 is modified (N-acetylmethionine). The region spanning 1 to 45 is the LEM domain; the sequence is MDDYAVLSDTELAAVLRQYNIPHGPIVGSTRKLYEKKIFEYETQR. A phosphoserine mark is found at Ser-8, Ser-29, Ser-54, Ser-72, Ser-88, Ser-99, Ser-141, and Ser-142. The interval 46 to 223 is interaction with F-actin; sequence RRLLPPNSSS…PAAALGQDRQ (178 aa). Tyr-161 carries the phosphotyrosine modification. The segment at 168-187 is interaction with CTNNB1; sequence RPISNVSRSSLGLSYYPTSS. Residues Ser-171, Ser-174, and Ser-176 each carry the phosphoserine modification. Residues 224 to 244 traverse the membrane as a helical segment; it reads VPLWGQLLLFLVFAAFLLFVY.

Interacts with lamins A and C, BANF1, GMCL, BCLAF1 and YTHDC1/YT521. Interacts with TMEM43; the interaction retains emerin in the inner nuclear membrane. Interacts with ACTB, SPTAN1, F-actin, CTNNB1 and beta-tubulin. Interacts with SUN1 and SUN2. Interacts with TMEM201. Interacts with NEMP1. In terms of tissue distribution, in the ovary, highest expression is seen in primordial follicle oocytes (at protein level). Detected in embryonic fibroblasts, skeletal muscle, heart muscle and tongue epithelium (at protein level). Widely expressed.

The protein localises to the nucleus inner membrane. Its subcellular location is the nucleus outer membrane. Functionally, stabilizes and promotes the formation of a nuclear actin cortical network. Stimulates actin polymerization in vitro by binding and stabilizing the pointed end of growing filaments. Inhibits beta-catenin activity by preventing its accumulation in the nucleus. Acts by influencing the nuclear accumulation of beta-catenin through a CRM1-dependent export pathway. Links centrosomes to the nuclear envelope via a microtubule association. Required for proper localization of non-farnesylated prelamin-A/C. Together with NEMP1, contributes to nuclear envelope stiffness in germ cells. The chain is Emerin (Emd) from Mus musculus (Mouse).